The sequence spans 396 residues: Phosphoglycerate kinase (396 aa).

Residues 21-23 (DLN), arginine 36, 59-62 (HFGR), arginine 118, and arginine 151 each bind substrate. ATP contacts are provided by residues lysine 201, glutamate 323, and 353–356 (GGDT).

The protein belongs to the phosphoglycerate kinase family. Monomer.

It is found in the cytoplasm. It carries out the reaction (2R)-3-phosphoglycerate + ATP = (2R)-3-phospho-glyceroyl phosphate + ADP. The protein operates within carbohydrate degradation; glycolysis; pyruvate from D-glyceraldehyde 3-phosphate: step 2/5. In Brucella melitensis biotype 1 (strain ATCC 23456 / CCUG 17765 / NCTC 10094 / 16M), this protein is Phosphoglycerate kinase.